The following is a 138-amino-acid chain: Protein PsiE homolog (138 aa).

4 helical membrane passes run 14 to 34 (LQALLNVCLFFLAIALSGLLI), 56 to 76 (YEMLGELLIFFMYFEFIALII), 84 to 104 (HFPLRYFIYIGITAVIRLIII), and 109 to 129 (AISTFWWAMAILAMICAFFIV).

It belongs to the PsiE family.

It localises to the cell membrane. This Bacillus velezensis (strain DSM 23117 / BGSC 10A6 / LMG 26770 / FZB42) (Bacillus amyloliquefaciens subsp. plantarum) protein is Protein PsiE homolog.